Reading from the N-terminus, the 570-residue chain is Hydroxylamine reductase (570 aa).

The [4Fe-4S] cluster site is built by C5, C8, C17, and C23. Positions 266, 290, 334, 425, 453, 478, 513, and 515 each coordinate hybrid [4Fe-2O-2S] cluster. Residue C425 is modified to Cysteine persulfide.

The protein belongs to the HCP family. [4Fe-4S] cluster is required as a cofactor. Requires hybrid [4Fe-2O-2S] cluster as cofactor.

It is found in the cytoplasm. The enzyme catalyses A + NH4(+) + H2O = hydroxylamine + AH2 + H(+). Catalyzes the reduction of hydroxylamine to form NH(3) and H(2)O. The sequence is that of Hydroxylamine reductase from Clostridium botulinum (strain Okra / Type B1).